A 311-amino-acid chain; its full sequence is tRNA-cytidine(32) 2-sulfurtransferase (311 aa).

Residues 47 to 52 (SGGKDS) carry the PP-loop motif motif. [4Fe-4S] cluster contacts are provided by cysteine 122, cysteine 125, and cysteine 213.

This sequence belongs to the TtcA family. As to quaternary structure, homodimer. Mg(2+) serves as cofactor. It depends on [4Fe-4S] cluster as a cofactor.

Its subcellular location is the cytoplasm. The catalysed reaction is cytidine(32) in tRNA + S-sulfanyl-L-cysteinyl-[cysteine desulfurase] + AH2 + ATP = 2-thiocytidine(32) in tRNA + L-cysteinyl-[cysteine desulfurase] + A + AMP + diphosphate + H(+). Its pathway is tRNA modification. Functionally, catalyzes the ATP-dependent 2-thiolation of cytidine in position 32 of tRNA, to form 2-thiocytidine (s(2)C32). The sulfur atoms are provided by the cysteine/cysteine desulfurase (IscS) system. In Shigella dysenteriae serotype 1 (strain Sd197), this protein is tRNA-cytidine(32) 2-sulfurtransferase.